A 325-amino-acid polypeptide reads, in one-letter code: Probable cell division protein WhiA (325 aa).

The segment at residues 273-306 (SLEELGALADPPLTKDAVAGRIRRLLALADKRAN) is a DNA-binding region (H-T-H motif).

The protein belongs to the WhiA family.

In terms of biological role, involved in cell division and chromosome segregation. The protein is Probable cell division protein WhiA of Parafrankia sp. (strain EAN1pec).